A 291-amino-acid polypeptide reads, in one-letter code: tRNA U34 carboxymethyltransferase (291 aa).

Residues K61, W75, K80, G100, 122–124 (DPS), 149–150 (VE), Y169, and R284 contribute to the carboxy-S-adenosyl-L-methionine site.

The protein belongs to the class I-like SAM-binding methyltransferase superfamily. CmoB family. Homotetramer.

The enzyme catalyses carboxy-S-adenosyl-L-methionine + 5-hydroxyuridine(34) in tRNA = 5-carboxymethoxyuridine(34) in tRNA + S-adenosyl-L-homocysteine + H(+). Its function is as follows. Catalyzes carboxymethyl transfer from carboxy-S-adenosyl-L-methionine (Cx-SAM) to 5-hydroxyuridine (ho5U) to form 5-carboxymethoxyuridine (cmo5U) at position 34 in tRNAs. The chain is tRNA U34 carboxymethyltransferase from Campylobacter jejuni subsp. jejuni serotype O:6 (strain 81116 / NCTC 11828).